Here is a 347-residue protein sequence, read N- to C-terminus: Dihydroorotase (347 aa).

The Zn(2+) site is built by His17 and His19. Residues 19 to 21 (HVR) and Asn45 contribute to the substrate site. Residues Lys102, His139, and His177 each contribute to the Zn(2+) site. Lys102 bears the N6-carboxylysine mark. His139 contacts substrate. Position 222 (Leu222) interacts with substrate. Asp250 contacts Zn(2+). Asp250 is an active-site residue. Substrate-binding residues include His254 and Ala266.

Belongs to the metallo-dependent hydrolases superfamily. DHOase family. Class II DHOase subfamily. As to quaternary structure, homodimer. It depends on Zn(2+) as a cofactor.

The enzyme catalyses (S)-dihydroorotate + H2O = N-carbamoyl-L-aspartate + H(+). It functions in the pathway pyrimidine metabolism; UMP biosynthesis via de novo pathway; (S)-dihydroorotate from bicarbonate: step 3/3. Its function is as follows. Catalyzes the reversible cyclization of carbamoyl aspartate to dihydroorotate. The polypeptide is Dihydroorotase (Acidovorax sp. (strain JS42)).